A 393-amino-acid chain; its full sequence is Probable N-acetyl-LL-diaminopimelate aminotransferase (393 aa).

N6-(pyridoxal phosphate)lysine is present on lysine 231.

It belongs to the class-I pyridoxal-phosphate-dependent aminotransferase family. As to quaternary structure, homodimer. The cofactor is pyridoxal 5'-phosphate.

The protein localises to the cytoplasm. It catalyses the reaction N-acetyl-(2S,6S)-2,6-diaminopimelate + 2-oxoglutarate = L-2-acetamido-6-oxoheptanedioate + L-glutamate. Its pathway is amino-acid biosynthesis; L-lysine biosynthesis via DAP pathway; LL-2,6-diaminopimelate from (S)-tetrahydrodipicolinate (acetylase route): step 2/3. In terms of biological role, essential for murein biosynthesis. Probably catalyzes the conversion of L-2-acetamido-6-oxopimelate to N-acetyl-LL-2,6-diaminopimelate. This is Probable N-acetyl-LL-diaminopimelate aminotransferase from Bacillus subtilis (strain 168).